Reading from the N-terminus, the 323-residue chain is Voltage-dependent calcium channel gamma-2 subunit (323 aa).

Residues 10–30 (MLLTTVGAFAAFSLMTIAVGT) form a helical membrane-spanning segment. N48 carries N-linked (GlcNAc...) asparagine glycosylation. 3 helical membrane passes run 104-124 (SSIFPILSVILLFMGGLCIAA), 134-154 (IILSAGIFFVSAGLSNIIGII), and 182-202 (FGALSFIIAEMVGVLAVHMFI). The interval 233–261 (YQRRSRSSSRSTEPSHSRDASPVGVKGFN) is disordered. The residue at position 253 (S253) is a Phosphoserine. Position 271 is a phosphotyrosine (Y271). T321 is modified (phosphothreonine; by PKA).

Belongs to the PMP-22/EMP/MP20 family. CACNG subfamily. As to quaternary structure, the L-type calcium channel is composed of five subunits: alpha-1, alpha-2/delta, beta and gamma. Interacts with the PDZ domains of DLG4/PSD-95 and DLG1/SAP97. May interact with GOPC. Acts as an auxiliary subunit for AMPA-selective glutamate receptors (AMPARs). Found in a complex with GRIA1, GRIA2, GRIA3, GRIA4, CNIH2, CNIH3, CACNG3, CACNG4, CACNG5, CACNG7 and CACNG8. Interacts with GRIA1 and GRIA2. Interacts with MPP2. Phosphorylation of Thr-321 by PKA impairs interaction with DLG1 and DLG4. As to expression, brain.

The protein resides in the membrane. It localises to the synapse. The protein localises to the synaptosome. Functionally, regulates the trafficking and gating properties of AMPA-selective glutamate receptors (AMPARs). Promotes their targeting to the cell membrane and synapses and modulates their gating properties by slowing their rates of activation, deactivation and desensitization. Does not show subunit-specific AMPA receptor regulation and regulates all AMPAR subunits. Thought to stabilize the calcium channel in an inactivated (closed) state. This is Voltage-dependent calcium channel gamma-2 subunit (Cacng2) from Mus musculus (Mouse).